Reading from the N-terminus, the 179-residue chain is Large ribosomal subunit protein uL5 (179 aa).

This sequence belongs to the universal ribosomal protein uL5 family. As to quaternary structure, part of the 50S ribosomal subunit; part of the 5S rRNA/L5/L18/L25 subcomplex. Contacts the 5S rRNA and the P site tRNA. Forms a bridge to the 30S subunit in the 70S ribosome.

Its function is as follows. This is one of the proteins that bind and probably mediate the attachment of the 5S RNA into the large ribosomal subunit, where it forms part of the central protuberance. In the 70S ribosome it contacts protein S13 of the 30S subunit (bridge B1b), connecting the 2 subunits; this bridge is implicated in subunit movement. Contacts the P site tRNA; the 5S rRNA and some of its associated proteins might help stabilize positioning of ribosome-bound tRNAs. The sequence is that of Large ribosomal subunit protein uL5 from Paraburkholderia phymatum (strain DSM 17167 / CIP 108236 / LMG 21445 / STM815) (Burkholderia phymatum).